The sequence spans 61 residues: Keratin-associated protein 8-1 (61 aa).

Positions glycine 13–cysteine 49 are 11 X 2 AA repeats of G-[YCGS].

The protein belongs to the KRTAP type 8 family. In terms of assembly, interacts with hair keratins. In terms of tissue distribution, expression restricted exclusively to the cortical cells of hair follicles.

In terms of biological role, in the hair cortex, hair keratin intermediate filaments are embedded in an interfilamentous matrix, consisting of hair keratin-associated proteins (KRTAP), which are essential for the formation of a rigid and resistant hair shaft through their extensive disulfide bond cross-linking with abundant cysteine residues of hair keratins. The matrix proteins include the high-sulfur and high-glycine-tyrosine keratins. This Mus musculus (Mouse) protein is Keratin-associated protein 8-1 (Krtap8-1).